Reading from the N-terminus, the 224-residue chain is ATP synthase subunit b (224 aa).

The chain crosses the membrane as a helical span at residues 2 to 22 (TPSLGLIFWQSVIFLISFIIL).

This sequence belongs to the ATPase B chain family. As to quaternary structure, F-type ATPases have 2 components, F(1) - the catalytic core - and F(0) - the membrane proton channel. F(1) has five subunits: alpha(3), beta(3), gamma(1), delta(1), epsilon(1). F(0) has three main subunits: a(1), b(2) and c(10-14). The alpha and beta chains form an alternating ring which encloses part of the gamma chain. F(1) is attached to F(0) by a central stalk formed by the gamma and epsilon chains, while a peripheral stalk is formed by the delta and b chains.

Its subcellular location is the cell membrane. In terms of biological role, f(1)F(0) ATP synthase produces ATP from ADP in the presence of a proton or sodium gradient. F-type ATPases consist of two structural domains, F(1) containing the extramembraneous catalytic core and F(0) containing the membrane proton channel, linked together by a central stalk and a peripheral stalk. During catalysis, ATP synthesis in the catalytic domain of F(1) is coupled via a rotary mechanism of the central stalk subunits to proton translocation. Its function is as follows. Component of the F(0) channel, it forms part of the peripheral stalk, linking F(1) to F(0). The protein is ATP synthase subunit b of Karelsulcia muelleri (strain GWSS) (Sulcia muelleri).